The following is a 572-amino-acid chain: Methionine--tRNA ligase (572 aa).

The 'HIGH' region motif lies at 11 to 21 (PYINGIKHLGN). Cysteine 143, cysteine 146, cysteine 156, and cysteine 159 together coordinate Zn(2+). The short motif at 346–350 (QFSTS) is the 'KMSKS' region element. ATP is bound at residue threonine 349.

The protein belongs to the class-I aminoacyl-tRNA synthetase family. MetG type 1 subfamily. In terms of assembly, monomer. The cofactor is Zn(2+).

It localises to the cytoplasm. It carries out the reaction tRNA(Met) + L-methionine + ATP = L-methionyl-tRNA(Met) + AMP + diphosphate. Is required not only for elongation of protein synthesis but also for the initiation of all mRNA translation through initiator tRNA(fMet) aminoacylation. This Dinoroseobacter shibae (strain DSM 16493 / NCIMB 14021 / DFL 12) protein is Methionine--tRNA ligase.